An 81-amino-acid polypeptide reads, in one-letter code: Fungal defensin micasin (81 aa).

The signal sequence occupies residues 1 to 21 (MQFTKLATILLVSLMGSAAIA). Positions 22-43 (APATNNAAVDAAADATPAVEKR) are excised as a propeptide. 3 cysteine pairs are disulfide-bonded: Cys-47-Cys-68, Cys-54-Cys-76, and Cys-58-Cys-78.

Belongs to the invertebrate defensin family.

The protein localises to the secreted. Its function is as follows. Antibacterial peptide with potent activity against both Gram-positive and Gram-negative bacteria. May kill bacteria via an intracellular action mode to affect protein folding. Does not show effects on tested filamentous fungi or on the yeast S.cerevisiae. Does not act by destroying the membrane integrity, which is consistent with its nonamphiphilic architecture. Acts more rapidly than vancomycin, suggesting it does not act by inhibiting cell-wall biosynthesis. Does not cause hemolysis and has no cytotoxic effect on HEK cells. In vivo, is as efficient as vancomycin to protect mouse peritonitis models from S.aureus and P.aeruginosa infections. This Arthroderma otae (Microsporum canis) protein is Fungal defensin micasin.